Here is a 156-residue protein sequence, read N- to C-terminus: ATP synthase subunit b (156 aa).

Residues 11–31 traverse the membrane as a helical segment; the sequence is AIAFVLFVMFCMKFVWPPIMA.

This sequence belongs to the ATPase B chain family. In terms of assembly, F-type ATPases have 2 components, F(1) - the catalytic core - and F(0) - the membrane proton channel. F(1) has five subunits: alpha(3), beta(3), gamma(1), delta(1), epsilon(1). F(0) has three main subunits: a(1), b(2) and c(10-14). The alpha and beta chains form an alternating ring which encloses part of the gamma chain. F(1) is attached to F(0) by a central stalk formed by the gamma and epsilon chains, while a peripheral stalk is formed by the delta and b chains.

It localises to the cell inner membrane. Functionally, f(1)F(0) ATP synthase produces ATP from ADP in the presence of a proton or sodium gradient. F-type ATPases consist of two structural domains, F(1) containing the extramembraneous catalytic core and F(0) containing the membrane proton channel, linked together by a central stalk and a peripheral stalk. During catalysis, ATP synthesis in the catalytic domain of F(1) is coupled via a rotary mechanism of the central stalk subunits to proton translocation. Component of the F(0) channel, it forms part of the peripheral stalk, linking F(1) to F(0). This Photorhabdus laumondii subsp. laumondii (strain DSM 15139 / CIP 105565 / TT01) (Photorhabdus luminescens subsp. laumondii) protein is ATP synthase subunit b.